Reading from the N-terminus, the 476-residue chain is Bifunctional protein HldE (476 aa).

Residues 1–319 are ribokinase; sequence MKVSLPAFEK…EALALHHGES (319 aa). Residue 195-198 coordinates ATP; it reads NMSE. Residue D264 is part of the active site. The segment at 345–476 is cytidylyltransferase; sequence MTNGCFDILH…AIIQNIMAKQ (132 aa).

It in the N-terminal section; belongs to the carbohydrate kinase PfkB family. The protein in the C-terminal section; belongs to the cytidylyltransferase family. In terms of assembly, homodimer.

It catalyses the reaction D-glycero-beta-D-manno-heptose 7-phosphate + ATP = D-glycero-beta-D-manno-heptose 1,7-bisphosphate + ADP + H(+). It carries out the reaction D-glycero-beta-D-manno-heptose 1-phosphate + ATP + H(+) = ADP-D-glycero-beta-D-manno-heptose + diphosphate. It functions in the pathway nucleotide-sugar biosynthesis; ADP-L-glycero-beta-D-manno-heptose biosynthesis; ADP-L-glycero-beta-D-manno-heptose from D-glycero-beta-D-manno-heptose 7-phosphate: step 1/4. The protein operates within nucleotide-sugar biosynthesis; ADP-L-glycero-beta-D-manno-heptose biosynthesis; ADP-L-glycero-beta-D-manno-heptose from D-glycero-beta-D-manno-heptose 7-phosphate: step 3/4. Catalyzes the phosphorylation of D-glycero-D-manno-heptose 7-phosphate at the C-1 position to selectively form D-glycero-beta-D-manno-heptose-1,7-bisphosphate. Its function is as follows. Catalyzes the ADP transfer from ATP to D-glycero-beta-D-manno-heptose 1-phosphate, yielding ADP-D-glycero-beta-D-manno-heptose. This is Bifunctional protein HldE from Shewanella sp. (strain MR-4).